A 452-amino-acid chain; its full sequence is UDP-N-acetylmuramoylalanine--D-glutamate ligase (452 aa).

115-121 provides a ligand contact to ATP; sequence GTNGKTT.

It belongs to the MurCDEF family.

It localises to the cytoplasm. The enzyme catalyses UDP-N-acetyl-alpha-D-muramoyl-L-alanine + D-glutamate + ATP = UDP-N-acetyl-alpha-D-muramoyl-L-alanyl-D-glutamate + ADP + phosphate + H(+). It functions in the pathway cell wall biogenesis; peptidoglycan biosynthesis. In terms of biological role, cell wall formation. Catalyzes the addition of glutamate to the nucleotide precursor UDP-N-acetylmuramoyl-L-alanine (UMA). The chain is UDP-N-acetylmuramoylalanine--D-glutamate ligase from Geobacter metallireducens (strain ATCC 53774 / DSM 7210 / GS-15).